Reading from the N-terminus, the 340-residue chain is Sideroflexin-5 (340 aa).

A run of 4 helical transmembrane segments spans residues 103 to 123 (IFMPFRMSGYIPFGTPIVVGL), 163 to 183 (FIQGYLGAVISAVSIAVGLNV), 254 to 274 (LTRVVLPMPILVLPPIVMSML), and 287 to 307 (LLPVQSLVCLAAFGLALPLAI).

It belongs to the sideroflexin family. As to expression, primarily expressed in the brain.

The protein localises to the mitochondrion inner membrane. The catalysed reaction is citrate(in) = citrate(out). Functionally, mitochondrial amino-acid transporter. Transports citrate. Does not act as a serine transporter: not able to mediate transport of serine into mitochondria. In brown adipose tissue, plays a role in the regulation of UCP1-dependent thermogenesis probably by supporting mitochondrial glycerol-3-phosphate utilization. The polypeptide is Sideroflexin-5 (Homo sapiens (Human)).